Here is a 155-residue protein sequence, read N- to C-terminus: Protein-export protein SecB (155 aa).

The protein belongs to the SecB family. In terms of assembly, homotetramer, a dimer of dimers. One homotetramer interacts with 1 SecA dimer.

It localises to the cytoplasm. In terms of biological role, one of the proteins required for the normal export of preproteins out of the cell cytoplasm. It is a molecular chaperone that binds to a subset of precursor proteins, maintaining them in a translocation-competent state. It also specifically binds to its receptor SecA. The protein is Protein-export protein SecB of Escherichia coli O127:H6 (strain E2348/69 / EPEC).